The chain runs to 589 residues: Transcription factor atf-6 homolog (589 aa).

A compositionally biased stretch (basic and acidic residues) spans 1 to 16; sequence MNFDNTVHESNFDDLL. The disordered stretch occupies residues 1 to 82; that stretch reads MNFDNTVHES…SSPPLSCANF (82 aa). Composition is skewed to low complexity over residues 36–54 and 67–78; these read GTDE…FSDQ and GDSSSDSSPPLS. The bZIP domain occupies 250 to 299; the sequence is QNRKIRNRMYAQASRMRKKEADEHMKMNLQELLQENEILRTENAALKQRL. The tract at residues 252-275 is basic motif; the sequence is RKIRNRMYAQASRMRKKEADEHMK. The stretch at 271–305 forms a coiled coil; that stretch reads DEHMKMNLQELLQENEILRTENAALKQRLAFFEHE. The tract at residues 281–295 is leucine-zipper; sequence LLQENEILRTENAAL. Residues 324–344 traverse the membrane as a helical segment; sequence IIAAGSVLMMFGLFAVISPFN.

Belongs to the bZIP family. ATF subfamily.

Its subcellular location is the nucleus. It is found in the membrane. In terms of biological role, transcription factor. Plays a role in the unfolded protein response (UPR), perhaps mainly during constitutive endoplasmic reticulum (ER) stress, by activating transcription of genes involved in the UPR. Plays a role in modulating lifespan, acting by positively regulating expression of calcium-binding chaperone crt-1, thereby influencing ER calcium homeostasis. By activating the UPR pathway, confers adaptive protection to subsequent exposure to hypoxia. Involved in protection against proteotoxicity, probably acting via the UPR. Probably acts in the UPR in parallel with the ire-1-xbp-1 and pek-1 pathways. May be regulated by endopeptidase S2P-mediated proteolytic cleavage. In Caenorhabditis elegans, this protein is Transcription factor atf-6 homolog.